Reading from the N-terminus, the 294-residue chain is Lipoyl synthase (294 aa).

[4Fe-4S] cluster-binding residues include cysteine 41, cysteine 46, cysteine 52, cysteine 67, cysteine 71, cysteine 74, and serine 281. The Radical SAM core domain occupies phenylalanine 53 to threonine 270.

It belongs to the radical SAM superfamily. Lipoyl synthase family. The cofactor is [4Fe-4S] cluster.

Its subcellular location is the cytoplasm. The catalysed reaction is [[Fe-S] cluster scaffold protein carrying a second [4Fe-4S](2+) cluster] + N(6)-octanoyl-L-lysyl-[protein] + 2 oxidized [2Fe-2S]-[ferredoxin] + 2 S-adenosyl-L-methionine + 4 H(+) = [[Fe-S] cluster scaffold protein] + N(6)-[(R)-dihydrolipoyl]-L-lysyl-[protein] + 4 Fe(3+) + 2 hydrogen sulfide + 2 5'-deoxyadenosine + 2 L-methionine + 2 reduced [2Fe-2S]-[ferredoxin]. The protein operates within protein modification; protein lipoylation via endogenous pathway; protein N(6)-(lipoyl)lysine from octanoyl-[acyl-carrier-protein]: step 2/2. In terms of biological role, catalyzes the radical-mediated insertion of two sulfur atoms into the C-6 and C-8 positions of the octanoyl moiety bound to the lipoyl domains of lipoate-dependent enzymes, thereby converting the octanoylated domains into lipoylated derivatives. This Baumannia cicadellinicola subsp. Homalodisca coagulata protein is Lipoyl synthase.